The following is a 327-amino-acid chain: Aldo/keto reductase slr0942 (327 aa).

18–27 (GEQIPALGLG) is a binding site for NADP(+). Tyr57 acts as the Proton donor in catalysis. His119 provides a ligand contact to substrate. Residue 216–280 (SPLGSGDRPA…SVNPERLEQN (65 aa)) participates in NADP(+) binding.

The protein belongs to the aldo/keto reductase family. In terms of assembly, monomer.

The catalysed reaction is a secondary alcohol + NADP(+) = a ketone + NADPH + H(+). Curcumin non-competitively inhibits the enzyme with respect to furfural. To a lesser extent, enzyme activity is also inhibited by indomethacin, coumarate, coumarin, and alrestatin. In terms of biological role, aldo/keto reductase with broad substrate spectrum. Catalyzes the NADPH-dependent reduction of aldehyde- and ketone-groups of different classes of carbonyl compounds to the corresponding alcohols. Highest enzymatic efficiency is observed with 4-oxonon-2-enal (4-ONE) and 4-hydroxynon-2-enal (4-HNE), that are lipid peroxidation products, and 9,10-phenanthrenequinone (9,10-PQ), a photoproduct of phenanthrene that is one of the most prevalent polycyclic aromatic hydrocarbons in the environment. Is also active on sugar-derived reactive carbonyls such as methylglyoxal (MG), glyoxal and 3-deoxyglucosone (3-DG), and on other lipid-derived carbonyls such as acrolein. May be involved in the detoxification of the toxic lipid peroxidation products 4-ONE and 4-HNE besides many other exo- and endogenic reactive carbonyl compounds (RCs) that may lead to photoinhibition or other cell damages. The protein is Aldo/keto reductase slr0942 of Synechocystis sp. (strain ATCC 27184 / PCC 6803 / Kazusa).